The sequence spans 269 residues: Flagellar brake protein YcgR (269 aa).

The segment at 1–42 is disordered; that stretch reads MLREPMNQHDAPGPAETGADSDAETDAETDAETDAGAADDRY. Positions 19 to 33 are enriched in acidic residues; that stretch reads ADSDAETDAETDAET. The PilZ domain maps to 149-261; that stretch reads QRRRHFRART…MENFLQRLVF (113 aa).

The protein belongs to the YcgR family. In terms of assembly, monomer. Interacts with the flagellar basal bodies.

It localises to the bacterial flagellum basal body. In terms of biological role, acts as a flagellar brake, regulating swimming and swarming in a bis-(3'-5') cyclic diguanylic acid (c-di-GMP)-dependent manner. Binds 1 c-di-GMP dimer per subunit. Increasing levels of c-di-GMP lead to decreased motility. The chain is Flagellar brake protein YcgR from Cupriavidus taiwanensis (strain DSM 17343 / BCRC 17206 / CCUG 44338 / CIP 107171 / LMG 19424 / R1) (Ralstonia taiwanensis (strain LMG 19424)).